We begin with the raw amino-acid sequence, 466 residues long: CCA-adding enzyme (466 aa).

Residues S55 and R58 each contribute to the ATP site. Residues S55 and R58 each coordinate CTP. The Mg(2+) site is built by D67, D69, and D118. Residues H141, K161, and Y170 each contribute to the ATP site. The CTP site is built by H141, K161, and Y170.

Belongs to the tRNA nucleotidyltransferase/poly(A) polymerase family. Archaeal CCA-adding enzyme subfamily. In terms of assembly, homodimer. The cofactor is Mg(2+).

The enzyme catalyses a tRNA precursor + 2 CTP + ATP = a tRNA with a 3' CCA end + 3 diphosphate. It carries out the reaction a tRNA with a 3' CCA end + 2 CTP + ATP = a tRNA with a 3' CCACCA end + 3 diphosphate. In terms of biological role, catalyzes the addition and repair of the essential 3'-terminal CCA sequence in tRNAs without using a nucleic acid template. Adds these three nucleotides in the order of C, C, and A to the tRNA nucleotide-73, using CTP and ATP as substrates and producing inorganic pyrophosphate. tRNA 3'-terminal CCA addition is required both for tRNA processing and repair. Also involved in tRNA surveillance by mediating tandem CCA addition to generate a CCACCA at the 3' terminus of unstable tRNAs. While stable tRNAs receive only 3'-terminal CCA, unstable tRNAs are marked with CCACCA and rapidly degraded. The sequence is that of CCA-adding enzyme from Haloarcula marismortui (strain ATCC 43049 / DSM 3752 / JCM 8966 / VKM B-1809) (Halobacterium marismortui).